The primary structure comprises 684 residues: TBC1 domain family member 23 (684 aa).

In terms of domain architecture, Rab-GAP TBC spans Pro-44–Ala-225. The residue at position 300 (Ser-300) is a Phosphoserine. Positions Glu-334–Val-446 constitute a Rhodanese domain. Phosphoserine is present on residues Ser-469, Ser-474, and Ser-507. A Phosphothreonine modification is found at Thr-514. A may mediate the interaction with C17orf75, FAM91A1 and WDR11 region spans residues Thr-514–Asp-558. Residues Thr-514 to Ser-684 are may mediate the interaction with WASHC1. Residue Ser-556 is modified to Phosphoserine. The interval Asp-559 to Ser-684 is may mediate the interaction with FKBP15 and WASHC2; required for endosome to Golgi trafficking.

In terms of assembly, directly interacts with GOLGA1 and GOLGA4. Interacts with FAM91A1, C17ORF75 and WDR11; the interaction recruits TBC1D23 to AP-1-derived vesicles. Directly interacts with WASHC1 and WASHC2/FAM21. Interacts with FKBP15.

The protein resides in the golgi apparatus. It localises to the trans-Golgi network. Its subcellular location is the cytoplasmic vesicle. Its function is as follows. Putative Rab GTPase-activating protein which plays a role in vesicular trafficking. Involved in endosome-to-Golgi trafficking. Acts as a bridging protein by binding simultaneously to golgins, including GOLGA1 and GOLGA4, located at the trans-Golgi, and to the WASH complex, located on endosome-derived vesicles. Together with WDR11 complex facilitates the golgin-mediated capture of vesicles generated using AP-1. Plays a role in brain development, including in cortical neuron positioning. May also be important for neurite outgrowth, possibly through its involvement in membrane trafficking and cargo delivery, 2 processes which are essential for axonal and dendritic growth. May act as a general inhibitor of innate immunity signaling, strongly inhibiting multiple TLR and dectin/CLEC7A-signaling pathways. Does not alter initial activation events, but instead affects maintenance of inflammatory gene expression several hours after bacterial lipopolysaccharide (LPS) challenge. The sequence is that of TBC1 domain family member 23 (Tbc1d23) from Mus musculus (Mouse).